A 35-amino-acid polypeptide reads, in one-letter code: Cupiennin-1b (35 aa).

Glutamic acid 1-amide is present on glutamate 35.

Belongs to the cationic peptide 04 (cupiennin) family. 01 subfamily. As to expression, expressed by the venom gland.

Its subcellular location is the secreted. Its function is as follows. Has antimicrobial activity against E.coli, E.faecalis, P.aeruginosa, and S.aureus. Has insecticidal and hemolytic activities. Probably acts by disturbing membrane function with its amphipathic structure. The polypeptide is Cupiennin-1b (Cupiennius salei (American wandering spider)).